The sequence spans 36 residues: Photosystem II reaction center protein M (36 aa).

Residues 5-25 (ILGVIATALFIIIPTSFLLIL) traverse the membrane as a helical segment.

The protein belongs to the PsbM family. As to quaternary structure, PSII is composed of 1 copy each of membrane proteins PsbA, PsbB, PsbC, PsbD, PsbE, PsbF, PsbH, PsbI, PsbJ, PsbK, PsbL, PsbM, PsbT, PsbX, PsbY, PsbZ, Psb30/Ycf12, at least 3 peripheral proteins of the oxygen-evolving complex and a large number of cofactors. It forms dimeric complexes.

The protein resides in the plastid. Its subcellular location is the chloroplast thylakoid membrane. Functionally, one of the components of the core complex of photosystem II (PSII). PSII is a light-driven water:plastoquinone oxidoreductase that uses light energy to abstract electrons from H(2)O, generating O(2) and a proton gradient subsequently used for ATP formation. It consists of a core antenna complex that captures photons, and an electron transfer chain that converts photonic excitation into a charge separation. This subunit is found at the monomer-monomer interface. This chain is Photosystem II reaction center protein M, found in Chlorella vulgaris (Green alga).